The sequence spans 306 residues: Putative HTH-type transcriptional regulatory protein Mhun_2548 (306 aa).

Residues 132-189 (LRELRETRSLSLGDLGQILGVSRRTVAKYEAGMGTTIEIALRIEETFDSGVIEPIDLI) form the HTH cro/C1-type domain. Residues 143-162 (LGDLGQILGVSRRTVAKYEA) constitute a DNA-binding region (H-T-H motif).

The protein is Putative HTH-type transcriptional regulatory protein Mhun_2548 of Methanospirillum hungatei JF-1 (strain ATCC 27890 / DSM 864 / NBRC 100397 / JF-1).